Here is a 242-residue protein sequence, read N- to C-terminus: Probable transcriptional regulatory protein Bcep18194_A5621 (242 aa).

It belongs to the TACO1 family.

Its subcellular location is the cytoplasm. The protein is Probable transcriptional regulatory protein Bcep18194_A5621 of Burkholderia lata (strain ATCC 17760 / DSM 23089 / LMG 22485 / NCIMB 9086 / R18194 / 383).